Reading from the N-terminus, the 274-residue chain is Transcription factor MYB32 (274 aa).

HTH myb-type domains lie at 9-61 (KDHT…INYL) and 62-116 (RPDL…KRKL). 2 consecutive DNA-binding regions (H-T-H motif) follow at residues 37–61 (WRSL…INYL) and 89–112 (WSLI…NTHV). The interval 123-144 (PATHRPINETKTSQDSSDSSKT) is disordered.

In terms of tissue distribution, mostly expressed in roots, and, to a lower extent, in stems, flower buds, and siliques.

The protein localises to the nucleus. The sequence is that of Transcription factor MYB32 (MYB32) from Arabidopsis thaliana (Mouse-ear cress).